The chain runs to 239 residues: 1-(5-phosphoribosyl)-5-[(5-phosphoribosylamino)methylideneamino] imidazole-4-carboxamide isomerase (239 aa).

The active-site Proton acceptor is aspartate 7. The Proton donor role is filled by aspartate 129.

Belongs to the HisA/HisF family.

The protein resides in the cytoplasm. The enzyme catalyses 1-(5-phospho-beta-D-ribosyl)-5-[(5-phospho-beta-D-ribosylamino)methylideneamino]imidazole-4-carboxamide = 5-[(5-phospho-1-deoxy-D-ribulos-1-ylimino)methylamino]-1-(5-phospho-beta-D-ribosyl)imidazole-4-carboxamide. Its pathway is amino-acid biosynthesis; L-histidine biosynthesis; L-histidine from 5-phospho-alpha-D-ribose 1-diphosphate: step 4/9. This Lactiplantibacillus plantarum (strain ATCC BAA-793 / NCIMB 8826 / WCFS1) (Lactobacillus plantarum) protein is 1-(5-phosphoribosyl)-5-[(5-phosphoribosylamino)methylideneamino] imidazole-4-carboxamide isomerase.